The primary structure comprises 63 residues: Large ribosomal subunit protein bL35 (63 aa).

It belongs to the bacterial ribosomal protein bL35 family.

The sequence is that of Large ribosomal subunit protein bL35 from Campylobacter curvus (strain 525.92).